A 302-amino-acid chain; its full sequence is 33 kDa chaperonin (302 aa).

Cystine bridges form between C255/C257 and C288/C291.

The protein belongs to the HSP33 family. In terms of processing, under oxidizing conditions two disulfide bonds are formed involving the reactive cysteines. Under reducing conditions zinc is bound to the reactive cysteines and the protein is inactive.

The protein localises to the cytoplasm. Its function is as follows. Redox regulated molecular chaperone. Protects both thermally unfolding and oxidatively damaged proteins from irreversible aggregation. Plays an important role in the bacterial defense system toward oxidative stress. The chain is 33 kDa chaperonin from Caulobacter vibrioides (strain ATCC 19089 / CIP 103742 / CB 15) (Caulobacter crescentus).